A 766-amino-acid polypeptide reads, in one-letter code: Slit homolog 2 protein (766 aa).

Positions 1–30 (MSGIGWQTLSLSLALVLSILNKVAPHACPA) are cleaved as a signal peptide. Residues 31 to 55 (QCSCSGSTVDCHGLALRIVPRNIPR) form the LRRNT domain. LRR repeat units lie at residues 56-77 (NTERLDLNGNNITRITKTDFAG), 80-101 (HLRILQLMENKISTIERGAFHD), 104-125 (ELERLRLNRNNLQLFPELLFLG), 128-149 (KLYRLDLSENQIQAIPRKAFRG), 152-173 (DIKNLQLDYNQISCIEDGAFRA), and 176-197 (DLEVLTLNNNNITRLSVASFNH). N-linked (GlcNAc...) asparagine glycosylation is present at asparagine 66. N-linked (GlcNAc...) asparagine glycosylation occurs at asparagine 186. In terms of domain architecture, LRRCT 1 spans 209 to 259 (NNLYCDCHLAWLSDWLRQRPRVGLYTQCMGPSHLRGHNVAEVQKREFVCSD). The LRRNT 2 domain occupies 268 to 304 (MAPSCSVLHCPIACTCSNNIVDCRGKGLTEIPTNLPE). The cysteines at positions 281 and 290 are disulfide-linked. 5 LRR repeats span residues 305–326 (TITEIRLEQNSIRVIPPGAFSP), 329–350 (KLRRLDLSNNQISELAPDAFQG), 353–374 (SLNSLVLYGNKITELPKSLFEG), 377–398 (SLQLLLLNANKINCLRVDAFQD), and 401–422 (NLNLLSLYDNKLQTVAKGTFSA). The LRRCT 2 domain maps to 434-484 (NPFICDCHLKWLADYLHTNPIETSGARCTSPRRLANKRIGQIKSKKFRCSG). 4 disulfide bridges follow: cysteine 438/cysteine 461, cysteine 440/cysteine 482, cysteine 502/cysteine 508, and cysteine 506/cysteine 515. An LRRNT 3 domain is found at 493-529 (SGDCFADLACPEKCRCEGTTVDCSNQKLNKIPDHIPQ). LRR repeat units lie at residues 530 to 551 (YTAELRLNNNEFTVLEATGIFK), 555 to 576 (QLRKINLSNNKITDIEEGAFEG), 579 to 600 (GVNEILLTSNRLENVQHKMFKG), 603 to 624 (SLKTLMLRSNRISCVGNDSFTG), and 627 to 648 (SVRLLSLYDNQITTVAPGAFGT). Residue asparagine 560 is glycosylated (N-linked (GlcNAc...) asparagine). A glycan (N-linked (GlcNAc...) asparagine) is linked at asparagine 619. The region spanning 660 to 710 (NPFNCNCHLAWLGEWLRRKRIVTGNPRCQKPYFLKEIPIQDVAIQDFTCDD) is the LRRCT 3 domain. 4 cysteine pairs are disulfide-bonded: cysteine 664–cysteine 687, cysteine 666–cysteine 708, cysteine 723–cysteine 729, and cysteine 727–cysteine 736. An LRRNT 4 domain is found at 714–750 (DNSCSPLSRCPSECTCLDTVVRCSNKGLKVLPKGIPR).

In terms of assembly, homodimer. Binds ROBO1 and ROBO2 with high affinity. Interacts with GREM1.

It localises to the secreted. In terms of biological role, thought to act as molecular guidance cue in cellular migration, and function appears to be mediated by interaction with roundabout homolog receptors. During neural development involved in axonal navigation at the ventral midline of the neural tube and projection of axons to different regions. SLIT1 and SLIT2 seem to be essential for midline guidance in the forebrain by acting as repulsive signal preventing inappropriate midline crossing by axons projecting from the olfactory bulb. In spinal cord development may play a role in guiding commissural axons once they reached the floor plate by modulating the response to netrin. In vitro, silences the attractive effect of NTN1 but not its growth-stimulatory effect and silencing requires the formation of a ROBO1-DCC complex. May be implicated in spinal cord midline post-crossing axon repulsion. In vitro, only commissural axons that crossed the midline responded to SLIT2. In the developing visual system appears to function as repellent for retinal ganglion axons by providing a repulsion that directs these axons along their appropriate paths prior to, and after passage through, the optic chiasm. In vitro, collapses and repels retinal ganglion cell growth cones. Seems to play a role in branching and arborization of CNS sensory axons, and in neuronal cell migration. Seems to be involved in regulating leukocyte migration. This chain is Slit homolog 2 protein (Slit2), found in Rattus norvegicus (Rat).